Consider the following 305-residue polypeptide: Olfactory receptor 9G1 (305 aa).

Topologically, residues 1-24 (MQRSNHTVTEFILLGFTTDPGMQL) are extracellular. N-linked (GlcNAc...) asparagine glycosylation occurs at Asn-5. Residues 25-45 (GLFVVFLGVYSLTVVGNSTLI) traverse the membrane as a helical segment. Residues 46 to 53 (VLICNDSC) are Cytoplasmic-facing. The helical transmembrane segment at 54-74 (LHTPMYFFTGNLSFLDLWYSS) threads the bilayer. Residues 75 to 98 (VYTPKILVTCISEDKSISFAGCLC) are Extracellular-facing. Cys-96 and Cys-188 form a disulfide bridge. Residues 99-119 (QFFFSAGLAYSECYLLAAVAY) form a helical membrane-spanning segment. Topologically, residues 120–138 (DRYVAISKPLLYAQAMSIK) are cytoplasmic. Residues 139–159 (LCALLVAVSYCGGFINSSIIT) form a helical membrane-spanning segment. Residues 160–196 (KKTFSFNFCRENIIDDFFCDLLPLVELACGEKGGYKI) are Extracellular-facing. The helical transmembrane segment at 197-216 (MMYFLLASNVICPAVLILAS) threads the bilayer. Over 217 to 236 (YLFIITSVLRISSSKGYLKA) the chain is Cytoplasmic. Residues 237–257 (FSTCSSHLTSVTLYYGSILYI) form a helical membrane-spanning segment. The Extracellular segment spans residues 258 to 270 (YALPRSSYSFDMD). Residues 271-291 (KIVSTFYTVVFPMLNLMIYSL) traverse the membrane as a helical segment. Residues 292–305 (RNKDVKEALKKLLP) are Cytoplasmic-facing.

The protein belongs to the G-protein coupled receptor 1 family.

Its subcellular location is the cell membrane. Functionally, odorant receptor. The protein is Olfactory receptor 9G1 (OR9G1) of Homo sapiens (Human).